The following is a 309-amino-acid chain: Glutaminase (309 aa).

Ser64, Asn114, Glu160, Asn167, Tyr191, Tyr243, and Val261 together coordinate substrate.

This sequence belongs to the glutaminase family. As to quaternary structure, homotetramer.

It carries out the reaction L-glutamine + H2O = L-glutamate + NH4(+). The polypeptide is Glutaminase (Rhizobium leguminosarum bv. trifolii (strain WSM2304)).